The chain runs to 359 residues: Peptide chain release factor 1 (359 aa).

An N5-methylglutamine modification is found at Gln-236.

The protein belongs to the prokaryotic/mitochondrial release factor family. Post-translationally, methylated by PrmC. Methylation increases the termination efficiency of RF1.

It localises to the cytoplasm. Functionally, peptide chain release factor 1 directs the termination of translation in response to the peptide chain termination codons UAG and UAA. The protein is Peptide chain release factor 1 of Lacticaseibacillus casei (strain BL23) (Lactobacillus casei).